The chain runs to 216 residues: MPKIISKRKFNILRKTKEEIFSQIVYTKKRNGLHKAAKEYYFKDKDFTIIEDQQDRPDKPEELDTPDIPKPPKPPKGPDQPEEPGQPGGPDDPNSGNKKMPKPDEFVTHRQLQEFKKDLLVELHEIFPTKPELKRVEEKVDVLFELQKAQGEQIRIQGEQIKELKVEQKAQGETLQLILQTLQKMNDRLDKIEGKMDKMESRMDKMETRLDKLESK.

The span at Phe47 to Glu62 shows a compositional bias: basic and acidic residues. Disordered regions lie at residues Phe47–Asp104 and Gly194–Lys216. Residues Ile68 to Pro78 are compositionally biased toward pro residues. Residues Glu83–Pro93 are compositionally biased toward low complexity.

This sequence belongs to the UPF0134 family.

The sequence is that of UPF0134 protein MPN_344 from Mycoplasma pneumoniae (strain ATCC 29342 / M129 / Subtype 1) (Mycoplasmoides pneumoniae).